A 133-amino-acid polypeptide reads, in one-letter code: Large ribosomal subunit protein bL19 (133 aa).

This sequence belongs to the bacterial ribosomal protein bL19 family.

Functionally, this protein is located at the 30S-50S ribosomal subunit interface and may play a role in the structure and function of the aminoacyl-tRNA binding site. In Stenotrophomonas maltophilia (strain R551-3), this protein is Large ribosomal subunit protein bL19.